The chain runs to 471 residues: Putative multidrug resistance protein MdtD (471 aa).

Helical transmembrane passes span Leu-12–Ala-32, Met-49–Ala-69, Ile-72–Cys-92, Leu-101–Val-123, Phe-138–Val-158, Trp-165–Met-185, Phe-195–Asp-215, Leu-220–Trp-240, Ile-265–Pro-285, Val-286–Met-306, Leu-342–Phe-362, Leu-393–Leu-413, and Val-431–Ala-451.

Belongs to the major facilitator superfamily. TCR/Tet family.

It localises to the cell inner membrane. This chain is Putative multidrug resistance protein MdtD, found in Enterobacter sp. (strain 638).